Reading from the N-terminus, the 239-residue chain is tRNA (guanine-N(7)-)-methyltransferase (239 aa).

Positions 68, 93, 120, and 143 each coordinate S-adenosyl-L-methionine. Asp143 is an active-site residue. Substrate is bound by residues Lys147, Asp180, and 217–220 (TKFE).

Belongs to the class I-like SAM-binding methyltransferase superfamily. TrmB family.

It catalyses the reaction guanosine(46) in tRNA + S-adenosyl-L-methionine = N(7)-methylguanosine(46) in tRNA + S-adenosyl-L-homocysteine. It functions in the pathway tRNA modification; N(7)-methylguanine-tRNA biosynthesis. Functionally, catalyzes the formation of N(7)-methylguanine at position 46 (m7G46) in tRNA. The polypeptide is tRNA (guanine-N(7)-)-methyltransferase (Vibrio cholerae serotype O1 (strain ATCC 39315 / El Tor Inaba N16961)).